The sequence spans 622 residues: WD repeat-containing protein 76 (622 aa).

3 disordered regions span residues 75 to 94 (NSSK…RRKV), 120 to 155 (ESTR…DFSG), and 189 to 209 (MIKK…KENE). The segment covering 80–94 (VVHKKKDRKKTRRKV) has biased composition (basic residues). WD repeat units follow at residues 310–351 (VTKG…EDAM), 356–398 (AHSR…EVYR), 400–438 (EGNS…TSYE), 443–482 (SSLE…SRGS), 490–530 (EHSK…SQLP), 540–584 (VTGR…VHSL), and 587–622 (ECLV…HQET).

The protein belongs to the WD repeat DDB2/WDR76 family. As to quaternary structure, interacts with CUL4A and/or CUL4B.

Functionally, specifically binds 5-hydroxymethylcytosine (5hmC), suggesting that it acts as a specific reader of 5hmC. In Mus musculus (Mouse), this protein is WD repeat-containing protein 76 (Wdr76).